A 147-amino-acid polypeptide reads, in one-letter code: Molybdopterin synthase catalytic subunit 1 (147 aa).

Substrate-binding positions include 43-45 (NVR), 109-110 (HR), Lys125, and 132-134 (KKE).

Belongs to the MoaE family. As to quaternary structure, heterotetramer of 2 MoaD subunits and 2 MoaE subunits. Also stable as homodimer. The enzyme changes between these two forms during catalysis.

It catalyses the reaction 2 [molybdopterin-synthase sulfur-carrier protein]-C-terminal-Gly-aminoethanethioate + cyclic pyranopterin phosphate + H2O = molybdopterin + 2 [molybdopterin-synthase sulfur-carrier protein]-C-terminal Gly-Gly + 2 H(+). It functions in the pathway cofactor biosynthesis; molybdopterin biosynthesis. Converts molybdopterin precursor Z into molybdopterin. This requires the incorporation of two sulfur atoms into precursor Z to generate a dithiolene group. The sulfur is provided by MoaD. The chain is Molybdopterin synthase catalytic subunit 1 (moaE1) from Mycobacterium tuberculosis (strain ATCC 25618 / H37Rv).